Consider the following 788-residue polypeptide: Auxin response factor 4 (788 aa).

The segment covering 1-19 (MEFDLNTEIAEVEEEENDD) has biased composition (acidic residues). Positions 1–53 (MEFDLNTEIAEVEEEENDDVGVGVGGGTRIDKGRLGISPSSSSSCSSGSSSSS) are disordered. The segment covering 38 to 53 (SPSSSSSCSSGSSSSS) has biased composition (low complexity). Residues 177 to 279 (FCKTLTASDT…ELRLGIRRAA (103 aa)) constitute a DNA-binding region (TF-B3). Residues 413–433 (LSIQSSPRPKRPWAGLLDTTP) are disordered. Positions 665-747 (RICTKVHKQG…VVWKIHLYTK (83 aa)) constitute a PB1 domain.

This sequence belongs to the ARF family. Homodimers and heterodimers. As to expression, expressed in the whole plant.

Its subcellular location is the nucleus. In terms of biological role, auxin response factors (ARFs) are transcriptional factors that bind specifically to the DNA sequence 5'-TGTCTC-3' found in the auxin-responsive promoter elements (AuxREs). Could act as transcriptional activator or repressor. Formation of heterodimers with Aux/IAA proteins may alter their ability to modulate early auxin response genes expression. The polypeptide is Auxin response factor 4 (ARF4) (Arabidopsis thaliana (Mouse-ear cress)).